Here is a 379-residue protein sequence, read N- to C-terminus: PqqA peptide cyclase (379 aa).

The 213-residue stretch at 8-220 (LPAPIGLLAE…IRVVEEARER (213 aa)) folds into the Radical SAM core domain. Residues cysteine 22, cysteine 26, and cysteine 29 each contribute to the [4Fe-4S] cluster site.

This sequence belongs to the radical SAM superfamily. PqqE family. As to quaternary structure, interacts with PqqD. The interaction is necessary for activity of PqqE. It depends on [4Fe-4S] cluster as a cofactor.

The catalysed reaction is [PQQ precursor protein] + S-adenosyl-L-methionine = E-Y cross-linked-[PQQ precursor protein] + 5'-deoxyadenosine + L-methionine + H(+). Its pathway is cofactor biosynthesis; pyrroloquinoline quinone biosynthesis. Catalyzes the cross-linking of a glutamate residue and a tyrosine residue in the PqqA protein as part of the biosynthesis of pyrroloquinoline quinone (PQQ). The sequence is that of PqqA peptide cyclase from Methylobacterium nodulans (strain LMG 21967 / CNCM I-2342 / ORS 2060).